A 458-amino-acid chain; its full sequence is tRNA modification GTPase MnmE (458 aa).

(6S)-5-formyl-5,6,7,8-tetrahydrofolate-binding residues include R30, E90, and K129. The region spanning 225–379 (GLSICLIGCP…LHQTIDTIIW (155 aa)) is the TrmE-type G domain. Residue N235 coordinates K(+). GTP is bound by residues 235–240 (NVGKSS), 254–260 (SPIPGTT), and 279–282 (DTAG). S239 is a binding site for Mg(2+). The K(+) site is built by S254, I256, and T259. A Mg(2+)-binding site is contributed by T260. K458 lines the (6S)-5-formyl-5,6,7,8-tetrahydrofolate pocket.

The protein belongs to the TRAFAC class TrmE-Era-EngA-EngB-Septin-like GTPase superfamily. TrmE GTPase family. Homodimer. Heterotetramer of two MnmE and two MnmG subunits. The cofactor is K(+).

It is found in the cytoplasm. Exhibits a very high intrinsic GTPase hydrolysis rate. Involved in the addition of a carboxymethylaminomethyl (cmnm) group at the wobble position (U34) of certain tRNAs, forming tRNA-cmnm(5)s(2)U34. In Protochlamydia amoebophila (strain UWE25), this protein is tRNA modification GTPase MnmE.